The sequence spans 116 residues: CDKN2AIP N-terminal-like protein (116 aa).

At methionine 1 the chain carries N-acetylmethionine. The 93-residue stretch at 24–116 folds into the XRN2-binding (XTBD) domain; the sequence is AEQFRSYSES…RSELMRKHQS (93 aa).

The protein belongs to the CARF family. In terms of assembly, interacts with XRN2; the interaction is direct.

In Mus musculus (Mouse), this protein is CDKN2AIP N-terminal-like protein (Cdkn2aipnl).